Consider the following 171-residue polypeptide: Large ribosomal subunit protein bL17 (171 aa).

The span at 140-152 (KREIQTKAREEKR) shows a compositional bias: basic and acidic residues. The tract at residues 140-171 (KREIQTKAREEKRATRKSNSAPVSKETTSKKK) is disordered. Residues 156 to 165 (KSNSAPVSKE) show a composition bias toward polar residues.

Belongs to the bacterial ribosomal protein bL17 family. Part of the 50S ribosomal subunit. Contacts protein L32.

The protein is Large ribosomal subunit protein bL17 of Leptospira interrogans serogroup Icterohaemorrhagiae serovar copenhageni (strain Fiocruz L1-130).